Here is a 254-residue protein sequence, read N- to C-terminus: MNAVMTDVRDLIRYCDDVLDAARFADYAPNGLQVEGERPLQRLVSGVTASAALIEAAIAEHADAILVHHGWFWKNENPCLIGIKGQRARTLLSAGVSLIAYHLPLDAHPELGNNATLGRRLDFIDMEPTALANGLLWVGRLAQPMTPASFTEHVSQRLARPALRVGRETGSIERVAWCTGGCQGYIEQAASLGVDAFLSGELSEQTTHQARELGLCYLAAGHHATERYGVQALGKHLAERFGLWHRFVEIDNPA.

A divalent metal cation is bound by residues H68, H69, D106, H222, and E226.

It belongs to the GTP cyclohydrolase I type 2/NIF3 family. Homohexamer.

In Allochromatium vinosum (strain ATCC 17899 / DSM 180 / NBRC 103801 / NCIMB 10441 / D) (Chromatium vinosum), this protein is GTP cyclohydrolase 1 type 2 homolog.